A 444-amino-acid polypeptide reads, in one-letter code: Dihydroorotate dehydrogenase (quinone), mitochondrial (444 aa).

A helical transmembrane segment spans residues 34–56 (GGASRYIIGTASVLVGAMAGFYI). Residues 124 to 128 (AGLDK) and T148 contribute to the FMN site. K128 lines the substrate pocket. 173–177 (NRYGF) contacts substrate. Residues N220 and N250 each coordinate FMN. 250–255 (NVSSPN) lines the substrate pocket. The active-site Nucleophile is S253. FMN is bound by residues K301 and S329. Substrate is bound at residue 330–331 (NT). Residues G355, G385, and 406-407 (YT) contribute to the FMN site.

It belongs to the dihydroorotate dehydrogenase family. Type 2 subfamily. FMN serves as cofactor.

It is found in the mitochondrion inner membrane. It carries out the reaction (S)-dihydroorotate + a quinone = orotate + a quinol. It functions in the pathway pyrimidine metabolism; UMP biosynthesis via de novo pathway; orotate from (S)-dihydroorotate (quinone route): step 1/1. Its function is as follows. Catalyzes the conversion of dihydroorotate to orotate with quinone as electron acceptor. The polypeptide is Dihydroorotate dehydrogenase (quinone), mitochondrial (URA9) (Eremothecium gossypii (strain ATCC 10895 / CBS 109.51 / FGSC 9923 / NRRL Y-1056) (Yeast)).